The sequence spans 126 residues: Fatty acid-binding protein, liver (126 aa).

Alanine 2 is subject to N-acetylalanine. Lysine 77, histidine 99, and glutamine 101 together coordinate cholate.

The protein belongs to the calycin superfamily. Fatty-acid binding protein (FABP) family.

It localises to the cytoplasm. Functionally, binds free fatty acids and their coenzyme A derivatives, bilirubin, and some other small molecules in the cytoplasm. May be involved in intracellular lipid transport. The polypeptide is Fatty acid-binding protein, liver (fabp1) (Aquarana catesbeiana (American bullfrog)).